Here is a 250-residue protein sequence, read N- to C-terminus: Sulfate transporter CysZ (250 aa).

The next 4 membrane-spanning stretches (helical) occupy residues 27–47 (FVVL…YYLF), 64–84 (FLSW…LATF), 150–170 (FLLL…WFLF), and 210–230 (MLVA…PVAV).

The protein belongs to the CysZ family.

It is found in the cell inner membrane. Functionally, high affinity, high specificity proton-dependent sulfate transporter, which mediates sulfate uptake. Provides the sulfur source for the cysteine synthesis pathway. The chain is Sulfate transporter CysZ from Vibrio cholerae serotype O1 (strain ATCC 39315 / El Tor Inaba N16961).